Reading from the N-terminus, the 565-residue chain is Formate--tetrahydrofolate ligase (565 aa).

73–80 is a binding site for ATP; sequence TPAGEGKS.

This sequence belongs to the formate--tetrahydrofolate ligase family.

It carries out the reaction (6S)-5,6,7,8-tetrahydrofolate + formate + ATP = (6R)-10-formyltetrahydrofolate + ADP + phosphate. The protein operates within one-carbon metabolism; tetrahydrofolate interconversion. The chain is Formate--tetrahydrofolate ligase from Arthrobacter sp. (strain FB24).